We begin with the raw amino-acid sequence, 440 residues long: ATP-dependent protease ATPase subunit HslU (440 aa).

ATP is bound by residues I18, 60–65 (GVGKTE), D252, E318, and R390.

The protein belongs to the ClpX chaperone family. HslU subfamily. In terms of assembly, a double ring-shaped homohexamer of HslV is capped on each side by a ring-shaped HslU homohexamer. The assembly of the HslU/HslV complex is dependent on binding of ATP.

The protein localises to the cytoplasm. Functionally, ATPase subunit of a proteasome-like degradation complex; this subunit has chaperone activity. The binding of ATP and its subsequent hydrolysis by HslU are essential for unfolding of protein substrates subsequently hydrolyzed by HslV. HslU recognizes the N-terminal part of its protein substrates and unfolds these before they are guided to HslV for hydrolysis. This Acidithiobacillus ferrooxidans (strain ATCC 23270 / DSM 14882 / CIP 104768 / NCIMB 8455) (Ferrobacillus ferrooxidans (strain ATCC 23270)) protein is ATP-dependent protease ATPase subunit HslU.